The sequence spans 537 residues: Prolyl 4-hydroxylase subunit alpha-2 (537 aa).

The first 23 residues, 1-23 (MKLQVLVLVLLMSWFGVLSWVQA), serve as a signal peptide directing secretion. Asn-117 carries N-linked (GlcNAc...) asparagine glycosylation. The TPR repeat unit spans residues 209–242 (SLVLDYLSYAVFQLGDLHRAVELTRRLLSLDPSH). An N-linked (GlcNAc...) asparagine glycan is attached at Asn-266. The Fe2OG dioxygenase domain occupies 414–522 (TAELLQVANY…KWVSNKWFHE (109 aa)). Positions 432 and 434 each coordinate Fe cation. Lys-482 is modified (N6-succinyllysine). Position 503 (His-503) interacts with Fe cation. A 2-oxoglutarate-binding site is contributed by Lys-513.

Belongs to the P4HA family. As to quaternary structure, heterotetramer of two alpha-2 chains and two beta chains (P4HB) (the beta chain is the multi-functional PDI), where P4HB plays the role of a structural subunit; this tetramer catalyzes the formation of 4-hydroxyproline in collagen. Requires Fe(2+) as cofactor. It depends on L-ascorbate as a cofactor. Expressed at least in brain, heart and lung.

The protein resides in the endoplasmic reticulum lumen. The enzyme catalyses L-prolyl-[collagen] + 2-oxoglutarate + O2 = trans-4-hydroxy-L-prolyl-[collagen] + succinate + CO2. With respect to regulation, inhibited by poly(L-proline) only at very high concentrations. In terms of biological role, catalyzes the post-translational formation of 4-hydroxyproline in -Xaa-Pro-Gly- sequences in collagens and other proteins. The chain is Prolyl 4-hydroxylase subunit alpha-2 (P4ha2) from Mus musculus (Mouse).